Consider the following 388-residue polypeptide: Succinate--CoA ligase [ADP-forming] subunit beta (388 aa).

Residues 9–244 (KQLFARYGLP…PSQEDSREAH (236 aa)) form the ATP-grasp domain. Residues lysine 46, 53–55 (GRG), glutamate 99, threonine 102, and glutamate 107 each bind ATP. 2 residues coordinate Mg(2+): asparagine 199 and aspartate 213. Residues asparagine 264 and 321 to 323 (GIV) contribute to the substrate site.

This sequence belongs to the succinate/malate CoA ligase beta subunit family. In terms of assembly, heterotetramer of two alpha and two beta subunits. It depends on Mg(2+) as a cofactor.

It catalyses the reaction succinate + ATP + CoA = succinyl-CoA + ADP + phosphate. The enzyme catalyses GTP + succinate + CoA = succinyl-CoA + GDP + phosphate. Its pathway is carbohydrate metabolism; tricarboxylic acid cycle; succinate from succinyl-CoA (ligase route): step 1/1. Succinyl-CoA synthetase functions in the citric acid cycle (TCA), coupling the hydrolysis of succinyl-CoA to the synthesis of either ATP or GTP and thus represents the only step of substrate-level phosphorylation in the TCA. The beta subunit provides nucleotide specificity of the enzyme and binds the substrate succinate, while the binding sites for coenzyme A and phosphate are found in the alpha subunit. This Pectobacterium atrosepticum (strain SCRI 1043 / ATCC BAA-672) (Erwinia carotovora subsp. atroseptica) protein is Succinate--CoA ligase [ADP-forming] subunit beta.